The sequence spans 745 residues: uncharacterized protein (745 aa).

One can recognise an HTH araC/xylS-type domain in the interval 158-256; sequence NQVCDYIELH…HQTPKQYRGD (99 aa). DNA-binding regions (H-T-H motif) lie at residues 175-196 and 223-246; these read SELS…AESL and ITDI…KHFT.

This is an uncharacterized protein from Staphylococcus aureus (strain MRSA252).